The following is a 610-amino-acid chain: Probable methyltransferase PMT22 (610 aa).

Residues 1-10 (MIKNIFQSRK) lie on the Cytoplasmic side of the membrane. A helical; Signal-anchor for type II membrane protein membrane pass occupies residues 11–31 (LSGLCVLSILLVSVTILLLTN). The Lumenal segment spans residues 32–610 (DTIDLFPYLS…LVGLKSSWRP (579 aa)). The span at 56-69 (STPISSPTNDSSPP) shows a compositional bias: low complexity. A disordered region spans residues 56–81 (STPISSPTNDSSPPLESPVNQTRVDD). N64, N75, N100, N400, N469, and N546 each carry an N-linked (GlcNAc...) asparagine glycan.

It belongs to the methyltransferase superfamily.

The protein resides in the endoplasmic reticulum membrane. The chain is Probable methyltransferase PMT22 from Arabidopsis thaliana (Mouse-ear cress).